The following is a 1687-amino-acid chain: A-kinase anchor protein SPHKAP (1687 aa).

The segment covering Met1 to Glu14 has biased composition (polar residues). 2 disordered regions span residues Met1 to Gln25 and Arg272 to Ser293. Residues Phe914–Ala931 are PKA-RII subunit binding domain. The segment at Leu964–Lys989 is disordered. Phosphoserine occurs at positions 1010, 1070, 1092, 1105, 1106, 1109, 1244, and 1273. Disordered regions lie at residues Val1363–Arg1406 and Asp1421–Thr1520. The segment covering Gly1366–Gly1375 has biased composition (polar residues). The span at Lys1382–Ser1393 shows a compositional bias: basic and acidic residues. A compositionally biased stretch (polar residues) spans Thr1461 to Arg1470. Residues Glu1482–Arg1494 show a composition bias toward basic and acidic residues. Positions Asn1495–Ser1508 are enriched in low complexity.

It belongs to the AKAP110 family. As to quaternary structure, interacts (via the PKA-RII subunit binding domain) with the RI subunit of PKA. Interacts with SPHK1; the interaction greatly reduces SPHK1 activity.

It is found in the cytoplasm. Functionally, anchoring protein that binds preferentially to the type I regulatory subunit of c-AMP-dependent protein kinase (PKA type I) and targets it to distinct subcellular compartments. May act as a converging factor linking cAMP and sphingosine signaling pathways. Plays a regulatory role in the modulation of SPHK1. The polypeptide is A-kinase anchor protein SPHKAP (Sphkap) (Mus musculus (Mouse)).